We begin with the raw amino-acid sequence, 331 residues long: 4-hydroxy-3-methylbut-2-enyl diphosphate reductase (331 aa).

C12 serves as a coordination point for [4Fe-4S] cluster. The (2E)-4-hydroxy-3-methylbut-2-enyl diphosphate site is built by H43 and H81. The dimethylallyl diphosphate site is built by H43 and H81. Residues H43 and H81 each contribute to the isopentenyl diphosphate site. Position 103 (C103) interacts with [4Fe-4S] cluster. H131 is a binding site for (2E)-4-hydroxy-3-methylbut-2-enyl diphosphate. H131 serves as a coordination point for dimethylallyl diphosphate. H131 serves as a coordination point for isopentenyl diphosphate. The active-site Proton donor is E133. Residue T170 coordinates (2E)-4-hydroxy-3-methylbut-2-enyl diphosphate. Residue C198 participates in [4Fe-4S] cluster binding. S226, N228, and S271 together coordinate (2E)-4-hydroxy-3-methylbut-2-enyl diphosphate. Dimethylallyl diphosphate is bound by residues S226, N228, and S271. 3 residues coordinate isopentenyl diphosphate: S226, N228, and S271.

The protein belongs to the IspH family. [4Fe-4S] cluster serves as cofactor.

It catalyses the reaction isopentenyl diphosphate + 2 oxidized [2Fe-2S]-[ferredoxin] + H2O = (2E)-4-hydroxy-3-methylbut-2-enyl diphosphate + 2 reduced [2Fe-2S]-[ferredoxin] + 2 H(+). It carries out the reaction dimethylallyl diphosphate + 2 oxidized [2Fe-2S]-[ferredoxin] + H2O = (2E)-4-hydroxy-3-methylbut-2-enyl diphosphate + 2 reduced [2Fe-2S]-[ferredoxin] + 2 H(+). Its pathway is isoprenoid biosynthesis; dimethylallyl diphosphate biosynthesis; dimethylallyl diphosphate from (2E)-4-hydroxy-3-methylbutenyl diphosphate: step 1/1. It participates in isoprenoid biosynthesis; isopentenyl diphosphate biosynthesis via DXP pathway; isopentenyl diphosphate from 1-deoxy-D-xylulose 5-phosphate: step 6/6. Functionally, catalyzes the conversion of 1-hydroxy-2-methyl-2-(E)-butenyl 4-diphosphate (HMBPP) into a mixture of isopentenyl diphosphate (IPP) and dimethylallyl diphosphate (DMAPP). Acts in the terminal step of the DOXP/MEP pathway for isoprenoid precursor biosynthesis. This is 4-hydroxy-3-methylbut-2-enyl diphosphate reductase from Listeria monocytogenes serovar 1/2a (strain ATCC BAA-679 / EGD-e).